The sequence spans 432 residues: Glutamate-1-semialdehyde 2,1-aminomutase (432 aa).

Residue lysine 271 is modified to N6-(pyridoxal phosphate)lysine.

Belongs to the class-III pyridoxal-phosphate-dependent aminotransferase family. HemL subfamily. Homodimer. Pyridoxal 5'-phosphate serves as cofactor.

Its subcellular location is the cytoplasm. It carries out the reaction (S)-4-amino-5-oxopentanoate = 5-aminolevulinate. It participates in porphyrin-containing compound metabolism; protoporphyrin-IX biosynthesis; 5-aminolevulinate from L-glutamyl-tRNA(Glu): step 2/2. In Protochlamydia amoebophila (strain UWE25), this protein is Glutamate-1-semialdehyde 2,1-aminomutase.